The following is a 600-amino-acid chain: Aspartate--tRNA ligase (600 aa).

Position 175 (Glu-175) interacts with L-aspartate. The aspartate stretch occupies residues 199–202 (QLFK). Arg-221 provides a ligand contact to L-aspartate. ATP-binding positions include 221-223 (RDE) and Gln-230. His-448 lines the L-aspartate pocket. ATP is bound at residue Glu-484. Arg-491 lines the L-aspartate pocket. 536-539 (GLDR) contacts ATP.

The protein belongs to the class-II aminoacyl-tRNA synthetase family. Type 1 subfamily. In terms of assembly, homodimer.

It localises to the cytoplasm. The enzyme catalyses tRNA(Asp) + L-aspartate + ATP = L-aspartyl-tRNA(Asp) + AMP + diphosphate. Catalyzes the attachment of L-aspartate to tRNA(Asp) in a two-step reaction: L-aspartate is first activated by ATP to form Asp-AMP and then transferred to the acceptor end of tRNA(Asp). The sequence is that of Aspartate--tRNA ligase from Limosilactobacillus reuteri (strain DSM 20016) (Lactobacillus reuteri).